We begin with the raw amino-acid sequence, 111 residues long: Ribonuclease P protein component (111 aa).

Belongs to the RnpA family. In terms of assembly, consists of a catalytic RNA component (M1 or rnpB) and a protein subunit.

It catalyses the reaction Endonucleolytic cleavage of RNA, removing 5'-extranucleotides from tRNA precursor.. Its function is as follows. RNaseP catalyzes the removal of the 5'-leader sequence from pre-tRNA to produce the mature 5'-terminus. It can also cleave other RNA substrates such as 4.5S RNA. The protein component plays an auxiliary but essential role in vivo by binding to the 5'-leader sequence and broadening the substrate specificity of the ribozyme. The sequence is that of Ribonuclease P protein component from Mycoplasmopsis pulmonis (strain UAB CTIP) (Mycoplasma pulmonis).